The chain runs to 906 residues: Protein translocase subunit SecA (906 aa).

ATP contacts are provided by residues Gln89, 107-111 (GEGKT), and Asp502. The tract at residues 868 to 887 (VPPAQRDPADPRTWGKVSRN) is disordered. Zn(2+) is bound by residues Cys890, Cys892, Cys901, and His902.

Belongs to the SecA family. In terms of assembly, monomer and homodimer. Part of the essential Sec protein translocation apparatus which comprises SecA, SecYEG and auxiliary proteins SecDF-YajC and YidC. It depends on Zn(2+) as a cofactor.

It is found in the cell inner membrane. The protein resides in the cytoplasm. The catalysed reaction is ATP + H2O + cellular proteinSide 1 = ADP + phosphate + cellular proteinSide 2.. Functionally, part of the Sec protein translocase complex. Interacts with the SecYEG preprotein conducting channel. Has a central role in coupling the hydrolysis of ATP to the transfer of proteins into and across the cell membrane, serving both as a receptor for the preprotein-SecB complex and as an ATP-driven molecular motor driving the stepwise translocation of polypeptide chains across the membrane. In Brucella abortus (strain S19), this protein is Protein translocase subunit SecA.